The following is a 124-amino-acid chain: Small ribosomal subunit protein uS12 (124 aa).

D89 is subject to 3-methylthioaspartic acid.

It belongs to the universal ribosomal protein uS12 family. As to quaternary structure, part of the 30S ribosomal subunit. Contacts proteins S8 and S17. May interact with IF1 in the 30S initiation complex.

Its function is as follows. With S4 and S5 plays an important role in translational accuracy. Interacts with and stabilizes bases of the 16S rRNA that are involved in tRNA selection in the A site and with the mRNA backbone. Located at the interface of the 30S and 50S subunits, it traverses the body of the 30S subunit contacting proteins on the other side and probably holding the rRNA structure together. The combined cluster of proteins S8, S12 and S17 appears to hold together the shoulder and platform of the 30S subunit. This Leptospira biflexa serovar Patoc (strain Patoc 1 / Ames) protein is Small ribosomal subunit protein uS12.